A 361-amino-acid polypeptide reads, in one-letter code: Aminomethyltransferase (361 aa).

The protein belongs to the GcvT family. The glycine cleavage system is composed of four proteins: P, T, L and H.

It carries out the reaction N(6)-[(R)-S(8)-aminomethyldihydrolipoyl]-L-lysyl-[protein] + (6S)-5,6,7,8-tetrahydrofolate = N(6)-[(R)-dihydrolipoyl]-L-lysyl-[protein] + (6R)-5,10-methylene-5,6,7,8-tetrahydrofolate + NH4(+). The glycine cleavage system catalyzes the degradation of glycine. This chain is Aminomethyltransferase, found in Bacteroides thetaiotaomicron (strain ATCC 29148 / DSM 2079 / JCM 5827 / CCUG 10774 / NCTC 10582 / VPI-5482 / E50).